The following is a 524-amino-acid chain: MDEESLAAALQTYRAQLEQVDLTLRAVTDPTQLEDLTQLHTDLQQLIELTESSLLSIQKCNLLTSLEGNPSLPFHEDPISLPALEVPTSLSSQDKEYEAFRMAISEESQPLGSNDETSTCSKGSEEEEEEEEEEEDNTSGMKVKAPYYSTWGTLEYHNAMVVGSEQMEDGEAGVRVLYLYPTHKAMKPCPFFLDGKCLFNDNCRFSHGQVVSVTELQPFKEADLGSLAVDSPCLAQHNDGIWYPARITDIESGFYTVKFDSLLLKESVLEADSIIPPLRGSDSSSSSSSDEEEDGAAEDSVYAKVLGQEIAGTTCSSEFGGWEAHTRGIGSKLLVRMGYEFGKGLGRNAEGRVEPIQAVVLPKGKSLDQCMEIQQRKKAGGKHKHKTSKRRPKASGQGGGAKARDIFDFLNEKLEGKFTSACTAETQKTGEKKGKELYNASKDSKRALSVQVAITAEKIKQKQREICHLKESLARNAGRESVISNQLEVRLSGARKELAGLQQEERSLQREQKKADTHKKMTEF.

The segment at 105 to 142 (SEESQPLGSNDETSTCSKGSEEEEEEEEEEEDNTSGMK) is disordered. A compositionally biased stretch (polar residues) spans 106 to 122 (EESQPLGSNDETSTCSK). Positions 125–137 (EEEEEEEEEEEDN) are enriched in acidic residues. The C3H1-type zinc-finger motif lies at 184–210 (KAMKPCPFFLDGKCLFNDNCRFSHGQV). The tract at residues 279-298 (RGSDSSSSSSSDEEEDGAAE) is disordered. Positions 326 to 372 (TRGIGSKLLVRMGYEFGKGLGRNAEGRVEPIQAVVLPKGKSLDQCME) constitute a G-patch domain. Disordered regions lie at residues 375–402 (QRKKAGGKHKHKTSKRRPKASGQGGGAK) and 500–524 (GLQQEERSLQREQKKADTHKKMTEF). Basic residues predominate over residues 376-393 (RKKAGGKHKHKTSKRRPK).

The protein localises to the nucleus. In terms of biological role, transcription repressor that specifically binds the 5'-GGAG[GA]A[GA]A-3' consensus sequence. Represses transcription by recruiting the chromatin multiprotein complex NuRD to target promoters. Negatively regulates expression of EGFR, a gene involved in cell proliferation, survival and migration. This Xenopus laevis (African clawed frog) protein is Zinc finger CCCH-type with G patch domain-containing protein (zgpat).